Here is a 359-residue protein sequence, read N- to C-terminus: E2F transcription factor-like E2FD (359 aa).

2 DNA-binding regions span residues 13–78 (RKDK…SWKG) and 138–217 (RKER…RWLG). Disordered stretches follow at residues 255–274 (RNKS…QNTS) and 288–313 (DVKN…NNIR). Positions 293 to 309 (ASGSSTPAGTSESNDMG) are enriched in polar residues.

This sequence belongs to the E2F/DP family. In terms of assembly, monomer. No interactions with DPA or E2FA. As to expression, preferentially expressed in proliferating tissues. Highly expressed in young stalk and young flowers. Lower expression in young leaves and mature flowers. Detected in cotyledonary vascular tissues, the shoot apical meristem, the base of trichomes, the fully developed stomata, the central root cylinder and in the columella of lateral roots but not in the primary root tips or in the leaf epidermal cells.

The protein resides in the nucleus. Inhibitor of E2F-dependent regulation of gene expression. Binds specifically the E2 recognition site as a monomer without interacting with DP proteins. May be up-regulating E2FA and down-regulating repressors of cell cycle progression. Promotes cell proliferation and represses cell elongation. Regulated by proteolysis via a ubiquitin-proteasome pathway. This Arabidopsis thaliana (Mouse-ear cress) protein is E2F transcription factor-like E2FD (E2FD).